The primary structure comprises 487 residues: Serine/threonine-protein kinase BSK8 (487 aa).

Gly2 carries N-myristoyl glycine lipidation. Ser20 bears the Phosphoserine mark. In terms of domain architecture, Protein kinase spans 59 to 325 (ENIVSEHGER…DLEIASHQLL (267 aa)). Residues 65 to 73 (HGERAPNVV), Asn71, Lys87, and 133 to 135 (EFM) contribute to the ATP site. The Proton acceptor role is filled by Asp181. Residues 185-186 (YR) and Asn205 contribute to the ATP site. A Phosphoserine modification is found at Ser213.

Belongs to the protein kinase superfamily. Ser/Thr protein kinase family. In terms of assembly, interacts with ASK7/BIN2, BSK1, BSK5, BSK6 and BSK11. Interacts with BSL2. Post-translationally, phosphorylated by BRI1, ASK7/BIN2 and ASK9/BIL2.

It is found in the cell membrane. It carries out the reaction L-seryl-[protein] + ATP = O-phospho-L-seryl-[protein] + ADP + H(+). It catalyses the reaction L-threonyl-[protein] + ATP = O-phospho-L-threonyl-[protein] + ADP + H(+). Probable serine/threonine kinase that acts as a positive regulator of brassinosteroid (BR) signaling downstream of the receptor kinase BRI1. Functions redundantly with BSK3, BSK4, BSK6 and BSK7. Involved in the regulation of sucrose-phosphate synthase 1 (SPS1) in the context of sucrose resuply after starvation. Activates BSL2, a phosphatase that may dephosphorylate SPS1, leading to the activation of SPS1. The chain is Serine/threonine-protein kinase BSK8 from Arabidopsis thaliana (Mouse-ear cress).